Consider the following 318-residue polypeptide: MNYQVLLYYKYMTIDDPEQFAQDHLAFCKAHHLKGRILVSTEGINGTLSGTKEETEQYMAHMHADERFKDMVFKIDEAEGHAFKKMHVRPRKEIVALDLEEDVDPRHTTGQYLSPVEFRKALEDDDTVIIDARNDYEFDLGHFRGAIRPNITRFRDLPDWIKENKALFADKKVVTYCTGGIRCEKFSGWLLKEGFEDIAQLHGGIATYGKDPETKGQYWDGKMYVFDDRISVDINEVEKTIIGKDWFDGKPCERYINCANPECNKQILVSEENEAKYLGACSYECAKHERNRYVQANNISDNEWQHRLTNFDDLHQHA.

One can recognise a Rhodanese domain in the interval 123–217 (EDDDTVIIDA…YGKDPETKGQ (95 aa)). The active-site Cysteine persulfide intermediate is Cys-177.

This sequence belongs to the TrhO family.

The catalysed reaction is uridine(34) in tRNA + AH2 + O2 = 5-hydroxyuridine(34) in tRNA + A + H2O. Its function is as follows. Catalyzes oxygen-dependent 5-hydroxyuridine (ho5U) modification at position 34 in tRNAs. This chain is tRNA uridine(34) hydroxylase, found in Staphylococcus aureus (strain bovine RF122 / ET3-1).